The sequence spans 355 residues: D-alanine--D-alanine ligase (355 aa).

Residues 143 to 350 (KKIFSHLEIP…IDQLVAKLVD (208 aa)) enclose the ATP-grasp domain. 178–233 (IEKLKLPVFVKPANSGSSLGISKAKTRSEIIKALQKAWEIDSRIVIEEGLDVRELE) is an ATP binding site. Mg(2+)-binding residues include Asp-303, Glu-317, and Asn-319.

This sequence belongs to the D-alanine--D-alanine ligase family. The cofactor is Mg(2+). Mn(2+) serves as cofactor.

Its subcellular location is the cytoplasm. The enzyme catalyses 2 D-alanine + ATP = D-alanyl-D-alanine + ADP + phosphate + H(+). The protein operates within cell wall biogenesis; peptidoglycan biosynthesis. Cell wall formation. The sequence is that of D-alanine--D-alanine ligase from Prochlorococcus marinus subsp. pastoris (strain CCMP1986 / NIES-2087 / MED4).